A 297-amino-acid polypeptide reads, in one-letter code: MRTKKRTKEMLPIFDQKKVAFIGAGSMAEGMISGIVRANKIPKQNICVTNRSNTERLAELELQYGIKGASPNQICIEDMDVLILAMKPKDAESALSSLKTRIQPHQLILSVLAGITTSFIEQSLLNQQPVVRVMPNTSSMIGASATAIALGKYVSEDLQKLAEALLGCMGEVYTIQENQMDIFTGIAGSGPAYFYYLMEFIEKTGEEAGLDKQLSRSIGAQTLLGAAKMLMETGEQPEVLRDNITSPNGTTAAGLQALKKSGGGEAISQAIKHAAKRSKEISDDIEKTAAPLSGVIK.

The protein belongs to the pyrroline-5-carboxylate reductase family.

It localises to the cytoplasm. It carries out the reaction L-proline + NADP(+) = (S)-1-pyrroline-5-carboxylate + NADPH + 2 H(+). The enzyme catalyses L-proline + NAD(+) = (S)-1-pyrroline-5-carboxylate + NADH + 2 H(+). Its pathway is amino-acid biosynthesis; L-proline biosynthesis; L-proline from L-glutamate 5-semialdehyde: step 1/1. Functionally, catalyzes the reduction of 1-pyrroline-5-carboxylate (PCA) to L-proline. The polypeptide is Pyrroline-5-carboxylate reductase 1 (proH) (Bacillus spizizenii (strain ATCC 23059 / NRRL B-14472 / W23) (Bacillus subtilis subsp. spizizenii)).